A 143-amino-acid polypeptide reads, in one-letter code: Small ribosomal subunit protein uS11c (143 aa).

Belongs to the universal ribosomal protein uS11 family. Part of the 30S ribosomal subunit.

Its subcellular location is the plastid. It localises to the chloroplast. The protein is Small ribosomal subunit protein uS11c of Cenchrus americanus (Pearl millet).